Consider the following 877-residue polypeptide: Alanine--tRNA ligase (877 aa).

Zn(2+) is bound by residues histidine 567, histidine 571, cysteine 669, and histidine 673.

The protein belongs to the class-II aminoacyl-tRNA synthetase family. It depends on Zn(2+) as a cofactor.

It localises to the cytoplasm. It catalyses the reaction tRNA(Ala) + L-alanine + ATP = L-alanyl-tRNA(Ala) + AMP + diphosphate. In terms of biological role, catalyzes the attachment of alanine to tRNA(Ala) in a two-step reaction: alanine is first activated by ATP to form Ala-AMP and then transferred to the acceptor end of tRNA(Ala). Also edits incorrectly charged Ser-tRNA(Ala) and Gly-tRNA(Ala) via its editing domain. The chain is Alanine--tRNA ligase from Rickettsia typhi (strain ATCC VR-144 / Wilmington).